The following is a 1315-amino-acid chain: Serine/threonine-protein kinase 36 (1315 aa).

The Protein kinase domain maps to 4–254 (YHVLEMIGEG…WPDLLYHPFI (251 aa)). ATP-binding positions include 10–18 (IGEGSFGRV) and K33. D125 functions as the Proton acceptor in the catalytic mechanism. Disordered stretches follow at residues 312–345 (EAMQ…PRLG) and 365–405 (SWAE…RSTD). A compositionally biased stretch (basic and acidic residues) spans 379–397 (RENRTTPDCERAFPEERPE).

Belongs to the protein kinase superfamily. Ser/Thr protein kinase family. Interacts with SPAG16 and KIF27. The cofactor is Mg(2+).

Its subcellular location is the cytoplasm. It localises to the nucleus. It is found in the cytoskeleton. The protein resides in the cilium axoneme. It catalyses the reaction L-seryl-[protein] + ATP = O-phospho-L-seryl-[protein] + ADP + H(+). The catalysed reaction is L-threonyl-[protein] + ATP = O-phospho-L-threonyl-[protein] + ADP + H(+). Its function is as follows. Serine/threonine protein kinase which plays an important role in the sonic hedgehog (Shh) pathway by regulating the activity of GLI transcription factors. Controls the activity of the transcriptional regulators GLI1, GLI2 and GLI3 by opposing the effect of SUFU and promoting their nuclear localization. GLI2 requires an additional function of STK36 to become transcriptionally active, but the enzyme does not need to possess an active kinase catalytic site for this to occur. Required for postnatal development, possibly by regulating the homeostasis of cerebral spinal fluid or ciliary function. Essential for construction of the central pair apparatus of motile cilia. The sequence is that of Serine/threonine-protein kinase 36 from Pongo abelii (Sumatran orangutan).